The sequence spans 60 residues: 5-hydroxytryptamine receptor 2B (60 aa).

Over 1–4 (VLCP) the chain is Extracellular. A helical membrane pass occupies residues 5-26 (AWLFLDVLFSTASIMHLCAISV). Positions 10 and 15 each coordinate ergotamine. The short motif at 27-29 (DRY) is the DRY motif; important for ligand-induced conformation changes element. Residues 27–46 (DRYIAIKKPIQANQYNSRAT) lie on the Cytoplasmic side of the membrane. The helical transmembrane segment at 47–60 (AFIKITVVWLISIG) threads the bilayer.

It belongs to the G-protein coupled receptor 1 family. Interacts (via C-terminus) with MPDZ. Detected in aorta, renal artery, jugular vein, vena cava and femoral vein.

The protein resides in the cell membrane. It is found in the synapse. The protein localises to the synaptosome. Functionally, G-protein coupled receptor for 5-hydroxytryptamine (serotonin). Also functions as a receptor for various ergot alkaloid derivatives and psychoactive substances. Ligand binding causes a conformation change that triggers signaling via guanine nucleotide-binding proteins (G proteins) and modulates the activity of downstream effectors. HTR2B is coupled to G(q)/G(11) G alpha proteins and activates phospholipase C-beta, releasing diacylglycerol (DAG) and inositol 1,4,5-trisphosphate (IP3) second messengers that modulate the activity of phosphatidylinositol 3-kinase and promote the release of Ca(2+) ions from intracellular stores, respectively. Beta-arrestin family members inhibit signaling via G proteins and mediate activation of alternative signaling pathways. Plays a role in the regulation of dopamine and 5-hydroxytryptamine release, 5-hydroxytryptamine uptake and in the regulation of extracellular dopamine and 5-hydroxytryptamine levels, and thereby affects neural activity. May play a role in the perception of pain. Plays a role in the regulation of behavior, including impulsive behavior. Required for normal proliferation of embryonic cardiac myocytes and normal heart development. Protects cardiomyocytes against apoptosis. Plays a role in the adaptation of pulmonary arteries to chronic hypoxia. Plays a role in vasoconstriction. Required for normal osteoblast function and proliferation, and for maintaining normal bone density. Required for normal proliferation of the interstitial cells of Cajal in the intestine. The polypeptide is 5-hydroxytryptamine receptor 2B (HTR2B) (Sus scrofa (Pig)).